The following is a 336-amino-acid chain: Fructose-1,6-bisphosphatase class 1 (336 aa).

Residues Glu-98, Asp-117, Leu-119, and Asp-120 each contribute to the Mg(2+) site. Residues 120 to 123, Asn-210, and Lys-276 contribute to the substrate site; that span reads DGSS. Residue Glu-282 coordinates Mg(2+).

The protein belongs to the FBPase class 1 family. In terms of assembly, homotetramer. Mg(2+) is required as a cofactor.

Its subcellular location is the cytoplasm. It catalyses the reaction beta-D-fructose 1,6-bisphosphate + H2O = beta-D-fructose 6-phosphate + phosphate. It functions in the pathway carbohydrate biosynthesis; gluconeogenesis. This is Fructose-1,6-bisphosphatase class 1 from Caulobacter vibrioides (strain ATCC 19089 / CIP 103742 / CB 15) (Caulobacter crescentus).